A 248-amino-acid chain; its full sequence is Pyridoxine 5'-phosphate synthase (248 aa).

Asparagine 12 serves as a coordination point for 3-amino-2-oxopropyl phosphate. Residue 14–15 (DH) coordinates 1-deoxy-D-xylulose 5-phosphate. Arginine 23 serves as a coordination point for 3-amino-2-oxopropyl phosphate. The active-site Proton acceptor is histidine 48. The 1-deoxy-D-xylulose 5-phosphate site is built by arginine 50 and histidine 55. Residue glutamate 75 is the Proton acceptor of the active site. Threonine 105 is a binding site for 1-deoxy-D-xylulose 5-phosphate. Histidine 199 (proton donor) is an active-site residue. 3-amino-2-oxopropyl phosphate is bound by residues glycine 200 and 221 to 222 (GH).

This sequence belongs to the PNP synthase family. In terms of assembly, homooctamer; tetramer of dimers.

The protein localises to the cytoplasm. It carries out the reaction 3-amino-2-oxopropyl phosphate + 1-deoxy-D-xylulose 5-phosphate = pyridoxine 5'-phosphate + phosphate + 2 H2O + H(+). It functions in the pathway cofactor biosynthesis; pyridoxine 5'-phosphate biosynthesis; pyridoxine 5'-phosphate from D-erythrose 4-phosphate: step 5/5. Catalyzes the complicated ring closure reaction between the two acyclic compounds 1-deoxy-D-xylulose-5-phosphate (DXP) and 3-amino-2-oxopropyl phosphate (1-amino-acetone-3-phosphate or AAP) to form pyridoxine 5'-phosphate (PNP) and inorganic phosphate. This is Pyridoxine 5'-phosphate synthase from Jannaschia sp. (strain CCS1).